Consider the following 730-residue polypeptide: Diacylglycerol kinase alpha (730 aa).

EF-hand domains are found at residues Arg111 to Val146 and Glu156 to Leu191. Residues Asp124, Asp126, Asn128, Glu135, Asp169, Asp171, Ser173, Ser175, and Glu180 each coordinate Ca(2+). 2 consecutive Phorbol-ester/DAG-type zinc fingers follow at residues Asn206–Cys254 and Ser270–Cys320. A DAGKc domain is found at Ser368–Pro501. Lys479 carries the N6-acetyllysine modification.

Belongs to the eukaryotic diacylglycerol kinase family. Monomer.

The protein localises to the cytoplasm. It localises to the cytosol. It catalyses the reaction a 1,2-diacyl-sn-glycerol + ATP = a 1,2-diacyl-sn-glycero-3-phosphate + ADP + H(+). It carries out the reaction a 1-O-alkyl-sn-glycerol + ATP = a 1-O-alkyl-sn-glycero-3-phosphate + ADP + H(+). The catalysed reaction is 1-O-alkyl-2-acyl-sn-glycerol + ATP = 1-O-alkyl-2-acyl-sn-glycero-3-phosphate + ADP + H(+). The enzyme catalyses 1,2-dihexadecanoyl-sn-glycerol + ATP = 1,2-dihexadecanoyl-sn-glycero-3-phosphate + ADP + H(+). It catalyses the reaction 1-hexadecanoyl-2-(9Z-octadecenoyl)-sn-glycerol + ATP = 1-hexadecanoyl-2-(9Z-octadecenoyl)-sn-glycero-3-phosphate + ADP + H(+). It carries out the reaction 2-(9Z-octadecenoyl)-glycerol + ATP = 2-(9Z-octadecenoyl)-sn-glycero-3-phosphate + ADP + H(+). The catalysed reaction is 1,2-di-(9Z-octadecenoyl)-sn-glycerol + ATP = 1,2-di-(9Z-octadecenoyl)-sn-glycero-3-phosphate + ADP + H(+). The enzyme catalyses 1-octadecanoyl-2-(5Z,8Z,11Z,14Z-eicosatetraenoyl)-sn-glycerol + ATP = 1-octadecanoyl-2-(5Z,8Z,11Z,14Z-eicosatetraenoyl)-sn-glycero-3-phosphate + ADP + H(+). It catalyses the reaction 1,2-didecanoyl-sn-glycerol + ATP = 1,2-didecanoyl-sn-glycero-3-phosphate + ADP + H(+). It carries out the reaction 1-O-hexadecyl-2-acetyl-sn-glycerol + ATP = 1-O-hexadecyl-2-acetyl-sn-glycero-3-phosphate + ADP + H(+). The catalysed reaction is 1-O-hexadecyl-2-(5Z,8Z,11Z,14Z-eicosatetraenoyl)-sn-glycerol + ATP = 1-O-hexadecyl-2-(5Z,8Z,11Z,14Z-eicosatetraenoyl)-sn-glycero-3-phosphate + ADP + H(+). The enzyme catalyses 1-O-hexadecyl-2-(9Z-octadecenoyl)-sn-glycerol + ATP = 1-O-hexadecyl-2-(9Z-octadecenoyl)-sn-glycero-3-phosphate + ADP + H(+). It catalyses the reaction 1-O-hexadecyl-sn-glycerol + ATP = 1-O-hexadecyl-sn-glycero-3-phosphate + ADP + H(+). Its pathway is lipid metabolism; glycerolipid metabolism. Its activity is regulated as follows. Stimulated by calcium and phosphatidylserine. Functionally, diacylglycerol kinase that converts diacylglycerol/DAG into phosphatidic acid/phosphatidate/PA and regulates the respective levels of these two bioactive lipids. Thereby, acts as a central switch between the signaling pathways activated by these second messengers with different cellular targets and opposite effects in numerous biological processes. Also plays an important role in the biosynthesis of complex lipids. Can also phosphorylate 1-alkyl-2-acylglycerol in vitro as efficiently as diacylglycerol provided it contains an arachidonoyl group. Also involved in the production of alkyl-lysophosphatidic acid, another bioactive lipid, through the phosphorylation of 1-alkyl-2-acetyl glycerol. In Mus musculus (Mouse), this protein is Diacylglycerol kinase alpha (Dgka).